A 221-amino-acid polypeptide reads, in one-letter code: Ribonuclease S-2 (221 aa).

A signal peptide spans 1–20 (MIYIFTMVFSLNVLILSSSA). Q31 contributes to the RNA binding site. C37 and C44 are joined by a disulfide. RNA-binding positions include H55, 91–92 (NV), F101, 104–105 (KQ), and 108–109 (KH). H55 acts as the Proton donor in catalysis. A disulfide bridge connects residues C70 and C112. N-linked (GlcNAc...) asparagine glycosylation is present at N91. Q105 is an active-site residue. H109 functions as the Proton acceptor in the catalytic mechanism. N-linked (GlcNAc...) asparagine glycans are attached at residues N137, N153, and N195. Disulfide bonds link C176-C214 and C191-C202.

It belongs to the RNase T2 family. In terms of processing, N-linked core structure at Asn-91, Asn-137, and Asn-153 contains xylose and at Asn-195 contains xylose and fucose.

It is found in the secreted. Its subcellular location is the extracellular space. The enzyme catalyses a ribonucleotidyl-ribonucleotide-RNA + H2O = a 3'-end 3'-phospho-ribonucleotide-RNA + a 5'-end dephospho-ribonucleoside-RNA + H(+). Functionally, self-incompatibility (SI) is the inherited ability of a flowering plant to prevent self-fertilization by discriminating between self and non-self pollen during pollination. In many species, self-incompatibility is controlled by the single, multiallelic locus S. The chain is Ribonuclease S-2 from Pyrus pyrifolia (Chinese pear).